The sequence spans 142 residues: Large ribosomal subunit protein uL13 (142 aa).

It belongs to the universal ribosomal protein uL13 family. In terms of assembly, part of the 50S ribosomal subunit.

Its function is as follows. This protein is one of the early assembly proteins of the 50S ribosomal subunit, although it is not seen to bind rRNA by itself. It is important during the early stages of 50S assembly. In Cellvibrio japonicus (strain Ueda107) (Pseudomonas fluorescens subsp. cellulosa), this protein is Large ribosomal subunit protein uL13.